We begin with the raw amino-acid sequence, 336 residues long: Cytoskeleton protein RodZ (336 aa).

Residues 1–111 (MNTEATHDQN…LGKRRKKRDG (111 aa)) are Cytoplasmic-facing. In terms of domain architecture, HTH cro/C1-type spans 19–71 (LRNAREQLGLSQQAVAERLCLKVSTVRDIEEDKAPADLASTFLRGYIRSYARL). Residues 30 to 49 (QQAVAERLCLKVSTVRDIEE) constitute a DNA-binding region (H-T-H motif). A helical; Signal-anchor for type II membrane protein transmembrane segment spans residues 112 to 132 (WLMTFTWLVLFVVIGLSGAWW). Topologically, residues 133–336 (WQDHKAQQEE…TLNAEQSPAQ (204 aa)) are periplasmic. Residues 148-164 (DQSSAELNNNQSQSVPL) show a composition bias toward polar residues. The segment at 148-248 (DQSSAELNNN…TDQAGVTTPA (101 aa)) is disordered. The segment covering 165-201 (DTSTTTDQAMATTPTSPVDTTATNTQTPAATTAPSPT) has biased composition (low complexity). The span at 202 to 217 (VDSQQNAVVPPSQANV) shows a compositional bias: polar residues. A compositionally biased stretch (low complexity) spans 219–236 (TAATPAPAATTMPDGAAP).

It belongs to the RodZ family.

It localises to the cell inner membrane. Functionally, cytoskeletal protein that is involved in cell-shape control through regulation of the length of the long axis. In Escherichia coli (strain SMS-3-5 / SECEC), this protein is Cytoskeleton protein RodZ.